Here is a 125-residue protein sequence, read N- to C-terminus: MRTTNHLYRTVHRQGKPLLPPLHLYRRILRAHRTFPPAQRALGDEYVKSEFKLHKNIDNPVHIIGFLASWQDYFHMISTNSWAEGTLSKSLVDQMSSEQIVQLYELMKETKQLGGASAESGSSLS.

Residues 1–42 (MRTTNHLYRTVHRQGKPLLPPLHLYRRILRAHRTFPPAQRAL) constitute a mitochondrion transit peptide.

It belongs to the complex I LYR family. SDHAF3 subfamily. As to quaternary structure, interacts with the iron-sulfur protein subunit within the SDH catalytic dimer.

It is found in the mitochondrion matrix. Its function is as follows. Plays an essential role in the assembly of succinate dehydrogenase (SDH), an enzyme complex (also referred to as respiratory complex II) that is a component of both the tricarboxylic acid (TCA) cycle and the mitochondrial electron transport chain, and which couples the oxidation of succinate to fumarate with the reduction of ubiquinone (coenzyme Q) to ubiquinol. Promotes maturation of the iron-sulfur protein subunit of the SDH catalytic dimer, protecting it from the deleterious effects of oxidants. May act together with SDHAF1. This Eremothecium gossypii (strain ATCC 10895 / CBS 109.51 / FGSC 9923 / NRRL Y-1056) (Yeast) protein is Succinate dehydrogenase assembly factor 3, mitochondrial.